We begin with the raw amino-acid sequence, 358 residues long: Polyadenylate-binding protein-interacting protein 11 (358 aa).

Low complexity predominate over residues 1 to 19 (MAVVETGAAATAADAGGVV). A disordered region spans residues 1-45 (MAVVETGAAATAADAGGVVIQPPPSSPPSSMTSQDSGVSSDDQNH). Residues 31 to 41 (MTSQDSGVSSD) are compositionally biased toward polar residues. The short motif at 92–102 (KLNPMAEEFVP) is the PAM2-like element. The interval 136–164 (GGYGNENGGFRRKKSFGQGKRRMNARTSM) is disordered. Residues 145–159 (FRRKKSFGQGKRRMN) show a composition bias toward basic residues. The Bipartite nuclear localization signal motif lies at 146–157 (RRKKSFGQGKRR). 2 RRM domains span residues 173 to 248 (RTVY…PSKT) and 270 to 346 (RTIY…PSKT).

In terms of tissue distribution, expressed in cauline leaves, stems, immature siliques and primary inflorescences.

Its subcellular location is the nucleus. This Arabidopsis thaliana (Mouse-ear cress) protein is Polyadenylate-binding protein-interacting protein 11 (CID11).